The following is a 186-amino-acid chain: Tumor necrosis factor alpha-induced protein 8-like protein 1 (186 aa).

Belongs to the TNFAIP8 family. As to quaternary structure, interacts with FBXW5; TNFAIP8L1 competes with TSC2 to bind FBXW5 increasing TSC2 stability by preventing its ubiquitination. As to expression, high expression detected in most carcinoma cell lines, especially in cells transformed with virus genomes.

The protein localises to the cytoplasm. In terms of biological role, acts as a negative regulator of mTOR activity. The sequence is that of Tumor necrosis factor alpha-induced protein 8-like protein 1 (TNFAIP8L1) from Homo sapiens (Human).